Here is a 332-residue protein sequence, read N- to C-terminus: MRKITVFGMGSFGTALANVLAQNGHDVLMWGKNVENVDELNTHHMNKNYLKDAKLDSSIKATVDLNKAVQFSDIYLMALPTKAIREVSKDIDQLLTSKKTFIHVAKGIENDTFKRVSEMIEDSISSEHNGGIGVLSGPSHAEEVVIKQPTTVAASSKDNNVSKLIQDLFMNDYLRVYTNNDLVGVELGGALKNIIAIASGIVAGMGYGDNAKAALMTRGLAEISRLGEKLGADPMTFLGLGGIGDLIVTCTSTHSRNYTLGFKLGQGKTAEEALKEMKMVVEGIYTTKSVYHLAQQEGVEMPITNALYEVLFEDVPVSKSVRTLMERDKKAE.

Residues Ser11, Phe12, Lys32, and Lys106 each contribute to the NADPH site. The sn-glycerol 3-phosphate site is built by Lys106, Gly137, and Ser139. Residue Ala141 coordinates NADPH. Residues Lys192, Asp245, Ser255, Arg256, and Asn257 each coordinate sn-glycerol 3-phosphate. Lys192 functions as the Proton acceptor in the catalytic mechanism. An NADPH-binding site is contributed by Arg256. Val280 and Glu282 together coordinate NADPH.

It belongs to the NAD-dependent glycerol-3-phosphate dehydrogenase family.

It localises to the cytoplasm. The enzyme catalyses sn-glycerol 3-phosphate + NAD(+) = dihydroxyacetone phosphate + NADH + H(+). It carries out the reaction sn-glycerol 3-phosphate + NADP(+) = dihydroxyacetone phosphate + NADPH + H(+). It participates in membrane lipid metabolism; glycerophospholipid metabolism. Its function is as follows. Catalyzes the reduction of the glycolytic intermediate dihydroxyacetone phosphate (DHAP) to sn-glycerol 3-phosphate (G3P), the key precursor for phospholipid synthesis. The sequence is that of Glycerol-3-phosphate dehydrogenase [NAD(P)+] from Staphylococcus epidermidis (strain ATCC 35984 / DSM 28319 / BCRC 17069 / CCUG 31568 / BM 3577 / RP62A).